Consider the following 317-residue polypeptide: Aspartate carbamoyltransferase catalytic subunit (317 aa).

Carbamoyl phosphate contacts are provided by Arg-66 and Thr-67. Lys-94 serves as a coordination point for L-aspartate. 3 residues coordinate carbamoyl phosphate: Arg-116, His-144, and Gln-147. 2 residues coordinate L-aspartate: Arg-177 and Arg-231. Residues Gly-272 and Pro-273 each contribute to the carbamoyl phosphate site.

It belongs to the aspartate/ornithine carbamoyltransferase superfamily. ATCase family. In terms of assembly, heterododecamer (2C3:3R2) of six catalytic PyrB chains organized as two trimers (C3), and six regulatory PyrI chains organized as three dimers (R2).

The enzyme catalyses carbamoyl phosphate + L-aspartate = N-carbamoyl-L-aspartate + phosphate + H(+). The protein operates within pyrimidine metabolism; UMP biosynthesis via de novo pathway; (S)-dihydroorotate from bicarbonate: step 2/3. Catalyzes the condensation of carbamoyl phosphate and aspartate to form carbamoyl aspartate and inorganic phosphate, the committed step in the de novo pyrimidine nucleotide biosynthesis pathway. This Rhodopseudomonas palustris (strain HaA2) protein is Aspartate carbamoyltransferase catalytic subunit.